The chain runs to 311 residues: Ribosomal RNA small subunit methyltransferase H (311 aa).

S-adenosyl-L-methionine-binding positions include 39–41 (GGH), Asp59, Phe81, Asp102, and His109.

It belongs to the methyltransferase superfamily. RsmH family.

The protein resides in the cytoplasm. It catalyses the reaction cytidine(1402) in 16S rRNA + S-adenosyl-L-methionine = N(4)-methylcytidine(1402) in 16S rRNA + S-adenosyl-L-homocysteine + H(+). Its function is as follows. Specifically methylates the N4 position of cytidine in position 1402 (C1402) of 16S rRNA. This is Ribosomal RNA small subunit methyltransferase H from Porphyromonas gingivalis (strain ATCC BAA-308 / W83).